The primary structure comprises 209 residues: Thymidylate kinase (209 aa).

7 to 14 (GIDGAGKS) is a binding site for ATP.

This sequence belongs to the thymidylate kinase family.

The catalysed reaction is dTMP + ATP = dTDP + ADP. In terms of biological role, phosphorylation of dTMP to form dTDP in both de novo and salvage pathways of dTTP synthesis. The polypeptide is Thymidylate kinase (Mycoplasma mobile (strain ATCC 43663 / 163K / NCTC 11711) (Mesomycoplasma mobile)).